Here is a 1073-residue protein sequence, read N- to C-terminus: Envelopment polyprotein (1073 aa).

Positions M1–G19 are cleaved as a signal peptide. Residues D20–W453 lie on the Lumenal side of the membrane. C26 and C49 form a disulfide bridge. N-linked (GlcNAc...) asparagine; by host glycans are attached at residues N33 and N63. 10 disulfides stabilise this stretch: C143–C156, C180–C327, C206–C216, C258–C305, C266–C303, C274–C280, C287–C292, C349–C352, C356–C424, and C376–C381. A helical transmembrane segment spans residues L454–L474. The segment at K475–I521 is golgi retention signal. At K475–E535 the chain is on the cytoplasmic side. Positions M536–S562 are internal signal sequence for glycoprotein C. 10 disulfides stabilise this stretch: C563-C604, C576-C586, C629-C725, C644-C841, C650-C698, C656-C705, C660-C687, C691-C696, C778-C793, and C809-C823. The Lumenal segment spans residues C563–W1036. The fusion loop stretch occupies residues C650–C656. The fusion loop stretch occupies residues C691 to C705. N-linked (GlcNAc...) asparagine; by host glycosylation is found at N853 and N914. 3 disulfides stabilise this stretch: C908-C978, C918-C921, and C943-C974. N936 carries an N-linked (GlcNAc...) asparagine; by host glycan. A helical transmembrane segment spans residues I1037–L1057. The Cytoplasmic portion of the chain corresponds to F1058 to A1073.

This sequence belongs to the phlebovirus envelope glycoprotein family. In terms of assembly, homodimer. Heterodimer with glycoprotein C. Homotrimer (postfusion). Heterodimer with glycoprotein N. In terms of processing, specific enzymatic cleavages in vivo yield mature proteins including glycoprotein C and glycoprotein N. Post-translationally, the cytoplasmic tail is Palmitoylated. Glycosylated. In terms of processing, palmitoylated.

Its subcellular location is the virion membrane. The protein resides in the host Golgi apparatus membrane. The protein localises to the host endoplasmic reticulum membrane. Structural component of the virion that interacts with glycoprotein C. It shields the hydrophobic fusion loops of the glycoprotein C, preventing premature fusion. The glycoprotein protrusions are arranged on an icosahedral lattice, with T=12 triangulation. They are able to attach the virion to the host cell receptor CD209/DC-SIGN and to promote fusion of membranes with the late endosome after clathrin-mediated endocytosis of the virion. Plays a role in the packaging of ribonucleoproteins during virus assembly. Its function is as follows. Structural component of the virion that interacts with glycoprotein N. Acts as a class II fusion protein that is activated upon acidification and subsequent repositioning of the glycoprotein N. The glycoprotein protrusions are arranged on an icosahedral lattice, with T=12 triangulation. They are able to attach the virion to the host cell receptor CD209/DC-SIGN and to promote fusion of membranes with the late endosome after clathrin-mediated endocytosis of the virion. This is Envelopment polyprotein from Dabie bandavirus (Severe fever with thrombocytopenia virus).